A 193-amino-acid polypeptide reads, in one-letter code: Potassium-transporting ATPase KdpC subunit (193 aa).

The chain crosses the membrane as a helical span at residues 7–27 (PLVVIFVVLTAVTGLAYPAVM).

Belongs to the KdpC family. The system is composed of three essential subunits: KdpA, KdpB and KdpC.

It is found in the cell inner membrane. Functionally, part of the high-affinity ATP-driven potassium transport (or Kdp) system, which catalyzes the hydrolysis of ATP coupled with the electrogenic transport of potassium into the cytoplasm. This subunit acts as a catalytic chaperone that increases the ATP-binding affinity of the ATP-hydrolyzing subunit KdpB by the formation of a transient KdpB/KdpC/ATP ternary complex. The chain is Potassium-transporting ATPase KdpC subunit from Burkholderia ambifaria (strain ATCC BAA-244 / DSM 16087 / CCUG 44356 / LMG 19182 / AMMD) (Burkholderia cepacia (strain AMMD)).